The sequence spans 158 residues: Transcription elongation factor GreA (158 aa).

Positions 47–74 (AEYHAAKEEQSHNEGRIAELEDKLARAD) form a coiled coil.

It belongs to the GreA/GreB family.

Functionally, necessary for efficient RNA polymerase transcription elongation past template-encoded arresting sites. The arresting sites in DNA have the property of trapping a certain fraction of elongating RNA polymerases that pass through, resulting in locked ternary complexes. Cleavage of the nascent transcript by cleavage factors such as GreA or GreB allows the resumption of elongation from the new 3'terminus. GreA releases sequences of 2 to 3 nucleotides. The protein is Transcription elongation factor GreA of Nitrobacter winogradskyi (strain ATCC 25391 / DSM 10237 / CIP 104748 / NCIMB 11846 / Nb-255).